A 205-amino-acid chain; its full sequence is Large ribosomal subunit protein bL25 (205 aa).

The interval Gln-184 to Ala-205 is disordered. Low complexity predominate over residues Ala-186–Ala-205.

It belongs to the bacterial ribosomal protein bL25 family. CTC subfamily. In terms of assembly, part of the 50S ribosomal subunit; part of the 5S rRNA/L5/L18/L25 subcomplex. Contacts the 5S rRNA. Binds to the 5S rRNA independently of L5 and L18.

Its function is as follows. This is one of the proteins that binds to the 5S RNA in the ribosome where it forms part of the central protuberance. The protein is Large ribosomal subunit protein bL25 of Cupriavidus necator (strain ATCC 17699 / DSM 428 / KCTC 22496 / NCIMB 10442 / H16 / Stanier 337) (Ralstonia eutropha).